Here is a 262-residue protein sequence, read N- to C-terminus: Ribosome-recycling factor, mitochondrial (262 aa).

The transit peptide at 1-55 directs the protein to the mitochondrion; the sequence is MALGIRCFRLLHPAFSSYLADLSRPVSEVPMKTVRGRQRDHIQYSAHPAVPVRQF.

The protein belongs to the RRF family.

The protein localises to the mitochondrion. Functionally, responsible for the disassembly of ribosomes from messenger RNA at the termination of mitochondrial protein biosynthesis. Acts in collaboration with GFM2. Promotes mitochondrial ribosome recycling by dissolution of intersubunit contacts. In Rattus norvegicus (Rat), this protein is Ribosome-recycling factor, mitochondrial (Mrrf).